The primary structure comprises 662 residues: Interleukin-12 receptor subunit beta-1 (662 aa).

The signal sequence occupies residues methionine 1–alanine 23. Over cysteine 24–aspartate 545 the chain is Extracellular. Fibronectin type-III domains follow at residues glycine 46–serine 136, proline 142–glutamate 234, proline 237–aspartate 337, threonine 338–serine 444, and threonine 448–glutamine 542. Residues cysteine 52 and cysteine 62 are joined by a disulfide bond. Asparagine 121 carries N-linked (GlcNAc...) asparagine glycosylation. The WSXWS motif motif lies at tryptophan 222 to serine 226. N-linked (GlcNAc...) asparagine glycosylation is found at asparagine 329, asparagine 346, asparagine 352, asparagine 442, and asparagine 456. The chain crosses the membrane as a helical span at residues tryptophan 546–leucine 570. Residues asparagine 571–methionine 662 lie on the Cytoplasmic side of the membrane. The short motif at leucine 577–cysteine 585 is the Box 1 motif element. The segment covering glycine 626–leucine 637 has biased composition (basic and acidic residues). The segment at glycine 626–threonine 648 is disordered.

This sequence belongs to the type I cytokine receptor family. Type 2 subfamily. In terms of assembly, dimer or oligomer; disulfide-linked. Interacts with IL12RB2 to form the high affinity IL12 receptor. Heterodimer with IL23R; in presence of IL23. The heterodimer forms the IL23 receptor.

The protein resides in the membrane. Functions as an interleukin receptor which binds interleukin-12 with low affinity and is involved in IL12 transduction. Associated with IL12RB2 it forms a functional, high affinity receptor for IL12. Also associates with IL23R to form the interleukin-23 receptor which functions in IL23 signal transduction probably through activation of the Jak-Stat signaling cascade. In Homo sapiens (Human), this protein is Interleukin-12 receptor subunit beta-1 (IL12RB1).